A 164-amino-acid chain; its full sequence is Interleukin-36 beta (164 aa).

A propeptide spanning residues 1–4 is cleaved from the precursor; that stretch reads MNPQ.

Belongs to the IL-1 family. As to quaternary structure, interacts with cargo receptor TMED10; the interaction mediates the translocation from the cytoplasm into the ERGIC (endoplasmic reticulum-Golgi intermediate compartment) and thereby secretion. N-terminal truncation leads to a dramatic enhancement of its activity (&gt;1000-fold). Expression at low levels in tonsil, bone marrow, heart, placenta, lung, testis and colon but not in any hematopoietic cell lines. Not detected in adipose tissue. Expressed at higher levels in psoriatic plaques than in symptomless psoriatic skin or healthy control skin. Increased levels are not detected in inflamed joint tissue.

Its subcellular location is the cytoplasm. The protein localises to the secreted. Its function is as follows. Cytokine that binds to and signals through the IL1RL2/IL-36R receptor which in turn activates NF-kappa-B and MAPK signaling pathways in target cells linked to a pro-inflammatory response. Part of the IL-36 signaling system that is thought to be present in epithelial barriers and to take part in local inflammatory response; similar to the IL-1 system with which it shares the coreceptor IL1RAP. Stimulates production of interleukin-6 and interleukin-8 in synovial fibrobasts, articular chondrocytes and mature adipocytes. Induces expression of a number of antimicrobial peptides including beta-defensins 4 and 103 as well as a number of matrix metalloproteases. Seems to be involved in skin inflammatory response by acting on keratinocytes, dendritic cells and indirectly on T-cells to drive tissue infiltration, cell maturation and cell proliferation. In cultured keratinocytes induces the expression of macrophage, T-cell, and neutrophil chemokines, such as CCL3, CCL4, CCL5, CCL2, CCL17, CCL22, CL20, CCL5, CCL2, CCL17, CCL22, CXCL8, CCL20 and CXCL1, and the production of pro-inflammatory cytokines such as TNF-alpha, IL-8 and IL-6. The polypeptide is Interleukin-36 beta (Homo sapiens (Human)).